We begin with the raw amino-acid sequence, 90 residues long: Small ribosomal subunit protein bS20 (90 aa).

Belongs to the bacterial ribosomal protein bS20 family.

Binds directly to 16S ribosomal RNA. The sequence is that of Small ribosomal subunit protein bS20 from Nautilia profundicola (strain ATCC BAA-1463 / DSM 18972 / AmH).